A 284-amino-acid polypeptide reads, in one-letter code: Pantothenate synthetase (284 aa).

Position 31 to 38 (31 to 38 (MGNLHAGH)) interacts with ATP. The Proton donor role is filled by H38. (R)-pantoate is bound at residue Q62. Q62 contacts beta-alanine. An ATP-binding site is contributed by 150 to 153 (GKKD). Q156 contributes to the (R)-pantoate binding site. Residues V179 and 187 to 190 (MSSR) each bind ATP.

It belongs to the pantothenate synthetase family. As to quaternary structure, homodimer.

It is found in the cytoplasm. It catalyses the reaction (R)-pantoate + beta-alanine + ATP = (R)-pantothenate + AMP + diphosphate + H(+). The protein operates within cofactor biosynthesis; (R)-pantothenate biosynthesis; (R)-pantothenate from (R)-pantoate and beta-alanine: step 1/1. Its function is as follows. Catalyzes the condensation of pantoate with beta-alanine in an ATP-dependent reaction via a pantoyl-adenylate intermediate. The sequence is that of Pantothenate synthetase from Xanthomonas campestris pv. campestris (strain 8004).